The sequence spans 223 residues: Trichome differentiation protein GL1 (223 aa).

2 consecutive HTH myb-type domains span residues 11 to 63 and 64 to 118; these read NQEY…MNYL and SPNV…SKKL. 2 consecutive DNA-binding regions (H-T-H motif) follow at residues 39–63 and 91–114; these read WNRIVRKTGLKRCGKSCRLRWMNYL and WSLIAKRVPGRTDNQVKNYWNTHL.

It is found in the nucleus. Its function is as follows. Regulates the production of a signal that induces hair (trichome) precursor cells on leaf primordia to differentiate. The polypeptide is Trichome differentiation protein GL1 (GL1) (Arabidopsis lyrata (Lyre-leaved rock-cress)).